The primary structure comprises 1001 residues: Protein MEI2-like 4 (1001 aa).

The disordered stretch occupies residues 100–120; it reads HANLPPSPWRPDQETGRQTDS. RRM domains are found at residues 275–348 and 360–433; these read RTLF…YSIP and GTIV…TSRL. 2 disordered regions span residues 767–815 and 941–1001; these read GGPS…KKQY and FHSD…PAKD. A compositionally biased stretch (basic and acidic residues) spans 793–803; it reads PGERMRSRRND. Positions 978-994 are enriched in polar residues; it reads DISITSVNCDTSTNGVD.

In terms of biological role, probable RNA-binding protein that may play a role in growth regulation. The polypeptide is Protein MEI2-like 4 (ML4) (Oryza sativa subsp. japonica (Rice)).